A 184-amino-acid chain; its full sequence is ATP synthase subunit b (184 aa).

A helical transmembrane segment spans residues Ile25 to Val45.

Belongs to the ATPase B chain family. In terms of assembly, F-type ATPases have 2 components, F(1) - the catalytic core - and F(0) - the membrane proton channel. F(1) has five subunits: alpha(3), beta(3), gamma(1), delta(1), epsilon(1). F(0) has three main subunits: a(1), b(2) and c(10-14). The alpha and beta chains form an alternating ring which encloses part of the gamma chain. F(1) is attached to F(0) by a central stalk formed by the gamma and epsilon chains, while a peripheral stalk is formed by the delta and b chains.

The protein resides in the cell membrane. Its function is as follows. F(1)F(0) ATP synthase produces ATP from ADP in the presence of a proton or sodium gradient. F-type ATPases consist of two structural domains, F(1) containing the extramembraneous catalytic core and F(0) containing the membrane proton channel, linked together by a central stalk and a peripheral stalk. During catalysis, ATP synthesis in the catalytic domain of F(1) is coupled via a rotary mechanism of the central stalk subunits to proton translocation. Component of the F(0) channel, it forms part of the peripheral stalk, linking F(1) to F(0). The polypeptide is ATP synthase subunit b (Mycoplasma mobile (strain ATCC 43663 / 163K / NCTC 11711) (Mesomycoplasma mobile)).